Here is a 227-residue protein sequence, read N- to C-terminus: UPF0758 protein Dhaf_4352 (227 aa).

Positions 105–227 constitute an MPN domain; sequence VINSPQDIAH…YISLKERGIL (123 aa). The Zn(2+) site is built by histidine 176, histidine 178, and aspartate 189. Positions 176–189 match the JAMM motif motif; the sequence is HNHPSGDPTPSSED.

The protein belongs to the UPF0758 family.

In Desulfitobacterium hafniense (strain DSM 10664 / DCB-2), this protein is UPF0758 protein Dhaf_4352.